The sequence spans 140 residues: Transcription antitermination protein NusB (140 aa).

This sequence belongs to the NusB family.

Its function is as follows. Involved in transcription antitermination. Required for transcription of ribosomal RNA (rRNA) genes. Binds specifically to the boxA antiterminator sequence of the ribosomal RNA (rrn) operons. The protein is Transcription antitermination protein NusB of Elusimicrobium minutum (strain Pei191).